We begin with the raw amino-acid sequence, 377 residues long: Pseudouridylate synthase RPUSD4, mitochondrial (377 aa).

The disordered stretch occupies residues 51–70 (LRAQKQQQKTKEPAPTNPVQ). Asp153 is a catalytic residue.

This sequence belongs to the pseudouridine synthase RluA family. As to quaternary structure, interacts with 16S mt-rRNA, mt-tRNA(Phe) and mt-tRNA(Met). Forms a regulatory protein-RNA complex, consisting of RCC1L, NGRN, RPUSD3, RPUSD4, TRUB2, FASTKD2 and 16S mt-rRNA.

The protein localises to the mitochondrion matrix. It is found in the nucleus. Its subcellular location is the cytoplasm. It catalyses the reaction uridine in 5S rRNA = pseudouridine in 5S rRNA. The enzyme catalyses a uridine in tRNA = a pseudouridine in tRNA. It carries out the reaction a uridine in mRNA = a pseudouridine in mRNA. In terms of biological role, catalyzes uridine to pseudouridine isomerization (pseudouridylation) of different mitochondrial RNA substrates. Acts on position 1397 in 16S mitochondrial ribosomal RNA (16S mt-rRNA). This modification is required for the assembly of 16S mt-rRNA into a functional mitochondrial ribosome. As a component of a functional protein-RNA module, consisting of RCC1L, NGRN, RPUSD3, RPUSD4, TRUB2, FASTKD2 and 16S mt-rRNA, controls 16S mt-rRNA abundance and is required for intra-mitochondrial translation. Acts on position 39 in mitochondrial tRNA(Phe). Also catalyzes pseudouridylation of mRNAs in nucleus: acts as a regulator of pre-mRNA splicing by mediating pseudouridylation of pre-mRNAs at locations associated with alternatively spliced regions. Pseudouridylation of pre-mRNAs near splice sites directly regulates mRNA splicing and mRNA 3'-end processing. The sequence is that of Pseudouridylate synthase RPUSD4, mitochondrial from Bos taurus (Bovine).